Reading from the N-terminus, the 535-residue chain is MSITSEELNYLIWRYCQEMGHEVSALALQDETRVLEFDEKYKEHIPLGTLVNLVQRGILYTESELMVDSKGDISALNEHHLSEDFNLVQALQIDKEKFPEISSEGRFTLETNSESNKAGEDGASTVERETQEDDTNSIDSSDDLDGFVKILKEIVKLDNIVSSTWNPLDESILAYGEKNSVARLARIVETDQEGKKYWKLTIIAELRHPFALSASSGKTTNQVTCLAWSHDGNSIVTGVENGELRLWNKTGALLNVLNFHRAPIVSVKWNKDGTHIISMDVENVTILWNVISGTVMQHFELKETGGSSINAENHSGDGSLGVDVEWVDDDKFVIPGPKGAIFVYQITEKTPTGKLIGHHGPISVLEFNDTNKLLLSASDDGTLRIWHGGNGNSQNCFYGHSQSIVSASWVGDDKVISCSMDGSVRLWSLKQNTLLALSIVDGVPIFAGRISQDGQKYAVAFMDGQVNVYDLKKLNSKSRSLYGNRDGILNPLPIPLYASYQSSQDNDYIFDLSWNCAGNKISVAYSLQEGSVVAI.

Residues 4–36 (TSEELNYLIWRYCQEMGHEVSALALQDETRVLE) form the LisH domain. Residues 104–140 (EGRFTLETNSESNKAGEDGASTVERETQEDDTNSIDS) are disordered. The span at 130 to 140 (TQEDDTNSIDS) shows a compositional bias: acidic residues. Ser-137 carries the phosphoserine modification. WD repeat units lie at residues 155–186 (VKLD…RLAR), 218–248 (KTTN…RLWN), 259–289 (FHRA…ILWN), 316–345 (GDGS…FVYQ), 357–387 (GHHG…RIWH), 399–428 (GHSQ…RLWS), 440–470 (VDGV…NVYD), and 503–534 (SQDN…SVVA).

In terms of assembly, homotetramer. Interacts with SIR4 N-terminal domain. Interacts with a complex composed of SIN3 and RPD3. Identified in the Set3C complex with HOS2, HST1, SNT1, CPR1, HOS4/YIL112W and SET3.

The protein localises to the nucleus. Its function is as follows. Antagonizes telomeric silencing in yeast. May recruit SIR4 to non-telomeric sites or repression. This is SIR4-interacting protein SIF2 (SIF2) from Saccharomyces cerevisiae (strain ATCC 204508 / S288c) (Baker's yeast).